Reading from the N-terminus, the 208-residue chain is Small ribosomal subunit protein uS4 (208 aa).

Residues 98–158 (GRLDNVVYRM…EKSKKQARIK (61 aa)) form the S4 RNA-binding domain.

It belongs to the universal ribosomal protein uS4 family. Part of the 30S ribosomal subunit. Contacts protein S5. The interaction surface between S4 and S5 is involved in control of translational fidelity.

Its function is as follows. One of the primary rRNA binding proteins, it binds directly to 16S rRNA where it nucleates assembly of the body of the 30S subunit. In terms of biological role, with S5 and S12 plays an important role in translational accuracy. In Haemophilus ducreyi (strain 35000HP / ATCC 700724), this protein is Small ribosomal subunit protein uS4.